A 434-amino-acid chain; its full sequence is Septin-6 (434 aa).

Alanine 2 carries the N-acetylalanine modification. Serine 27 is subject to Phosphoserine. In terms of domain architecture, Septin-type G spans 39–305; the sequence is QGFCFNILCV…ELYRRCKLEE (267 aa). Positions 49–56 are G1 motif; that stretch reads GETGLGKS. Residues 49–56, glycine 104, 185–193, glycine 239, and arginine 254 contribute to the GTP site; these read GETGLGKS and KADAISKSE. Residues 101-104 are G3 motif; that stretch reads STVG. A G4 motif region spans residues 184-187; sequence AKAD. Residues 321–409 are a coiled coil; it reads QETYEAKRNE…KTAAELLQSQ (89 aa). At lysine 367 the chain carries N6-acetyllysine. Positions 405 to 434 are disordered; that stretch reads LLQSQGSQAGGSQTLKRDKEKKNNPWLCTE. Over residues 407–417 the composition is skewed to low complexity; sequence QSQGSQAGGSQ. Residue serine 416 is modified to Phosphoserine. A Phosphothreonine modification is found at threonine 418.

Belongs to the TRAFAC class TrmE-Era-EngA-EngB-Septin-like GTPase superfamily. Septin GTPase family. In terms of assembly, septins polymerize into heterooligomeric protein complexes that form filaments, and associate with cellular membranes, actin filaments and microtubules. GTPase activity is required for filament formation. Filaments are assembled from asymmetrical heterotrimers, composed of SEPTIN2, SEPTIN6 and SEPTIN7 that associate head-to-head to form a hexameric unit. Within the trimer, directly interacts with SEPTIN2 and SEPTIN7. Also interacts with SEPTIN9 and SEPTIN12. Interaction with SEPTIN12 alters filament structure. Component of a septin core octameric complex consisting of SEPTIN12, SEPTIN7, SEPTIN6 and SEPTIN2 or SEPTIN4 in the order 12-7-6-2-2-6-7-12 or 12-7-6-4-4-6-7-12 and located in the sperm annulus. Interacts with SOCS7. Interacts with HNRNPA1. (Microbial infection) Interacts with HCV NS5B. In terms of tissue distribution, widely expressed.

It is found in the cytoplasm. The protein localises to the cytoskeleton. The protein resides in the spindle. Its subcellular location is the chromosome. It localises to the centromere. It is found in the kinetochore. The protein localises to the cleavage furrow. The protein resides in the midbody. Its subcellular location is the cell projection. It localises to the cilium. It is found in the flagellum. Filament-forming cytoskeletal GTPase. Required for normal organization of the actin cytoskeleton. Involved in cytokinesis. May play a role in HCV RNA replication. Forms a filamentous structure with SEPTIN12, SEPTIN6, SEPTIN2 and probably SEPTIN4 at the sperm annulus which is required for the structural integrity and motility of the sperm tail during postmeiotic differentiation. This Homo sapiens (Human) protein is Septin-6.